Here is a 319-residue protein sequence, read N- to C-terminus: Acetyl-coenzyme A carboxylase carboxyl transferase subunit alpha (319 aa).

The CoA carboxyltransferase C-terminal domain maps to 31-292; that stretch reads EIDSAIRSLR…KTYLSRQLSE (262 aa).

This sequence belongs to the AccA family. Acetyl-CoA carboxylase is a heterohexamer composed of biotin carboxyl carrier protein (AccB), biotin carboxylase (AccC) and two subunits each of ACCase subunit alpha (AccA) and ACCase subunit beta (AccD).

The protein localises to the cytoplasm. It catalyses the reaction N(6)-carboxybiotinyl-L-lysyl-[protein] + acetyl-CoA = N(6)-biotinyl-L-lysyl-[protein] + malonyl-CoA. The protein operates within lipid metabolism; malonyl-CoA biosynthesis; malonyl-CoA from acetyl-CoA: step 1/1. Functionally, component of the acetyl coenzyme A carboxylase (ACC) complex. First, biotin carboxylase catalyzes the carboxylation of biotin on its carrier protein (BCCP) and then the CO(2) group is transferred by the carboxyltransferase to acetyl-CoA to form malonyl-CoA. This Rhodopirellula baltica (strain DSM 10527 / NCIMB 13988 / SH1) protein is Acetyl-coenzyme A carboxylase carboxyl transferase subunit alpha.